Reading from the N-terminus, the 421-residue chain is Trimethyllysine dioxygenase, mitochondrial (421 aa).

The transit peptide at M1 to D15 directs the protein to the mitochondrion. K236 carries the post-translational modification N6-acetyllysine. Residues H242, D244, and H389 each coordinate Fe cation.

It belongs to the gamma-BBH/TMLD family. In terms of assembly, homodimer. Fe(2+) is required as a cofactor. L-ascorbate serves as cofactor.

Its subcellular location is the mitochondrion matrix. The catalysed reaction is N(6),N(6),N(6)-trimethyl-L-lysine + 2-oxoglutarate + O2 = (3S)-3-hydroxy-N(6),N(6),N(6)-trimethyl-L-lysine + succinate + CO2. Its pathway is amine and polyamine biosynthesis; carnitine biosynthesis. Converts trimethyllysine (TML) into hydroxytrimethyllysine (HTML). This chain is Trimethyllysine dioxygenase, mitochondrial (TMLHE), found in Bos taurus (Bovine).